The chain runs to 92 residues: Phenol 2-monooxygenase, auxiliary component DmpK (92 aa).

Homotrimer or homotetramer. Interacts with the phenol hydroxylase components DmpL (P1 component) and DmpN (P3 component).

It participates in aromatic compound metabolism; phenol degradation. Its function is as follows. DmpK is an auxiliary protein associated with the multicomponent phenol hydroxylase DmpLMNOP and it may be involved in the post-translational incorporation of iron into the oxygenase component of the phenol hydroxylase. Required for growth on phenol but not for in vitro phenol hydroxylase activity. In Pseudomonas sp. (strain CF600), this protein is Phenol 2-monooxygenase, auxiliary component DmpK.